The sequence spans 314 residues: Elongation factor Ts (314 aa).

The segment at 82–85 (TDFV) is involved in Mg(2+) ion dislocation from EF-Tu.

The protein belongs to the EF-Ts family.

The protein localises to the cytoplasm. Its function is as follows. Associates with the EF-Tu.GDP complex and induces the exchange of GDP to GTP. It remains bound to the aminoacyl-tRNA.EF-Tu.GTP complex up to the GTP hydrolysis stage on the ribosome. In Nostoc punctiforme (strain ATCC 29133 / PCC 73102), this protein is Elongation factor Ts.